A 633-amino-acid polypeptide reads, in one-letter code: Chitin synthase regulatory factor 4 (633 aa).

A disordered region spans residues 121-151; the sequence is ATSSQETKRDRPLPNIRNSAPSATRSHSTPC. The span at 136–149 shows a compositional bias: polar residues; sequence IRNSAPSATRSHST. At Ser-148 the chain carries Phosphoserine. 5 Sel1-like repeats span residues 278–314, 315–346, 438–474, 475–511, and 512–543; these read AKAM…NLGY, TRSL…SEND, SSAQ…KRGE, TEAD…MAGN, and ANAQ…KAGH. Residues 583 to 613 are disordered; sequence ASETSPPHAPAVSSTPVTSAPPVSQTKVTKV. The segment covering 592-613 has biased composition (low complexity); the sequence is PAVSSTPVTSAPPVSQTKVTKV.

Its subcellular location is the cytoplasm. In terms of biological role, involved in septum formation. Required for the proper localization of chs2 at the septum. In Schizosaccharomyces pombe (strain 972 / ATCC 24843) (Fission yeast), this protein is Chitin synthase regulatory factor 4 (chr4).